A 302-amino-acid polypeptide reads, in one-letter code: N-acetyl-D-glucosamine kinase (302 aa).

ATP-binding positions include 4 to 11 (GFDVGGTK) and 133 to 140 (GFGGGLVF). Zn(2+) is bound by residues H157, C177, C179, and C184.

This sequence belongs to the ROK (NagC/XylR) family. NagK subfamily.

The catalysed reaction is N-acetyl-D-glucosamine + ATP = N-acetyl-D-glucosamine 6-phosphate + ADP + H(+). Its pathway is cell wall biogenesis; peptidoglycan recycling. In terms of biological role, catalyzes the phosphorylation of N-acetyl-D-glucosamine (GlcNAc) derived from cell-wall degradation, yielding GlcNAc-6-P. This is N-acetyl-D-glucosamine kinase from Aliivibrio salmonicida (strain LFI1238) (Vibrio salmonicida (strain LFI1238)).